The sequence spans 142 residues: Large ribosomal subunit protein uL13 (142 aa).

It belongs to the universal ribosomal protein uL13 family. In terms of assembly, part of the 50S ribosomal subunit.

Its function is as follows. This protein is one of the early assembly proteins of the 50S ribosomal subunit, although it is not seen to bind rRNA by itself. It is important during the early stages of 50S assembly. The sequence is that of Large ribosomal subunit protein uL13 from Alkaliphilus metalliredigens (strain QYMF).